Consider the following 625-residue polypeptide: Probable potassium transport system protein Kup (625 aa).

12 helical membrane passes run 10-30 (LAALTLAAVGIVYGDIGTSPL), 50-70 (LLGVVSLIVWGLIIIVSLKYV), 102-122 (YFPLLVMGLFGATLFYGDSVI), 142-162 (FDPYVVPLTVAVLVGLYSVQA), 172-192 (FGPIMVVWFATLAVMGVVNII), 215-235 (FLAFIALGAVVLAFTGAEALY), 250-270 (WFLVAFPALALNYLGQGALLL), 284-304 (LGAWSIYPLVALSTMAAIIAS), 340-360 (IYIPAVNWLQMAVVVMAVVGF), 369-389 (AYGIAVTATMLVTTILTFFVI), 397-417 (LLLCLASTGFFLVIDLSLFSA), and 422-442 (LFHGGWFPLLLGTILFTLMLT).

This sequence belongs to the HAK/KUP transporter (TC 2.A.72) family.

The protein localises to the cell inner membrane. The catalysed reaction is K(+)(in) + H(+)(in) = K(+)(out) + H(+)(out). Transport of potassium into the cell. Likely operates as a K(+):H(+) symporter. The sequence is that of Probable potassium transport system protein Kup from Janthinobacterium sp. (strain Marseille) (Minibacterium massiliensis).